The chain runs to 254 residues: Protein CbbY, plasmid (254 aa).

The protein belongs to the HAD-like hydrolase superfamily. CbbY/CbbZ/Gph/YieH family.

The protein is Protein CbbY, plasmid (cbbYP) of Cupriavidus necator (strain ATCC 17699 / DSM 428 / KCTC 22496 / NCIMB 10442 / H16 / Stanier 337) (Ralstonia eutropha).